Consider the following 725-residue polypeptide: Exocyst complex component 8 (725 aa).

Residue serine 19 is modified to Phosphoserine. The tract at residues 137-159 (AGFFSTPGGASRDGSGPGEEGKQ) is disordered. A Phosphothreonine modification is found at threonine 142. Positions 182-282 (YLVYNGDLVE…WLEVLEDTKR (101 aa)) constitute a PH domain. The disordered stretch occupies residues 285–328 (SEKRRREQEEAAAPRGPPQVTSKATNPFEDDEEEEPAVPEVEEE). Residues 312 to 328 (FEDDEEEEPAVPEVEEE) are compositionally biased toward acidic residues.

Belongs to the EXO84 family. As to quaternary structure, the exocyst complex is composed of EXOC1, EXOC2, EXOC3, EXOC4, EXOC5, EXOC6, EXOC7 and EXOC8. Interacts (via PH domain) with GTP-bound RALA and RALB. Interacts with SH3BP1; required for the localization of both SH3BP1 and the exocyst to the leading edge of migrating cells.

It localises to the cytoplasm. Its subcellular location is the perinuclear region. It is found in the cell projection. The protein localises to the growth cone. Component of the exocyst complex involved in the docking of exocytic vesicles with fusion sites on the plasma membrane. This is Exocyst complex component 8 (EXOC8) from Homo sapiens (Human).